We begin with the raw amino-acid sequence, 133 residues long: Small ribosomal subunit protein uS8 (133 aa).

Belongs to the universal ribosomal protein uS8 family. In terms of assembly, part of the 30S ribosomal subunit. Contacts proteins S5 and S12.

In terms of biological role, one of the primary rRNA binding proteins, it binds directly to 16S rRNA central domain where it helps coordinate assembly of the platform of the 30S subunit. This chain is Small ribosomal subunit protein uS8, found in Syntrophus aciditrophicus (strain SB).